Here is a 223-residue protein sequence, read N- to C-terminus: Putative oxidoreductase MT1904 (223 aa).

Residue 4–28 (LVTGGDTDLGRTMAEGFRNDGHKVT) coordinates NADP(+). S128 contacts substrate.

This sequence belongs to the short-chain dehydrogenases/reductases (SDR) family.

This Mycobacterium tuberculosis (strain CDC 1551 / Oshkosh) protein is Putative oxidoreductase MT1904.